A 450-amino-acid chain; its full sequence is Divalent metal cation transporter MntH (450 aa).

11 helical membrane-spanning segments follow: residues 34-54 (LSFLGPGLLVAGGYMDSGNWI), 59-81 (GGAQYGYTLLFGNLISRLSAMLL), 108-128 (IAIIFWIIAELAIIATDIAEV), 141-161 (IPLIVGALITVLDVFLLLFIM), 170-190 (AIVGTLIFTVLFIFIFEVYIS), 212-232 (GILYIALGIIGATIMPHNLYL), 263-283 (IQLSIAFVVNCLLLVLGASLF), 305-325 (PVLGATMGAIMSTLFAVALLA), 361-381 (SLAVIPVIVCLIIFKGNAAKI), 383-403 (QLLVFSQVFLSIALPFCLIPL), and 422-442 (VNIISWTLIIILSILNVYLIV).

It belongs to the NRAMP family.

The protein resides in the cell membrane. In terms of biological role, h(+)-stimulated, divalent metal cation uptake system. The polypeptide is Divalent metal cation transporter MntH (Staphylococcus aureus (strain MRSA252)).